Consider the following 308-residue polypeptide: RNA pseudouridylate synthase domain-containing protein 1 (308 aa).

Met-1 carries the post-translational modification N-acetylmethionine. Asp-67 is a catalytic residue. Residues 257-292 are disordered; sequence APDPDPSEGGPGPCSPCTPLPGPGRPPPPPETEVQR. The span at 269–287 shows a compositional bias: pro residues; the sequence is PCSPCTPLPGPGRPPPPPE.

It belongs to the pseudouridine synthase RluA family.

This chain is RNA pseudouridylate synthase domain-containing protein 1 (RPUSD1), found in Bos taurus (Bovine).